A 170-amino-acid polypeptide reads, in one-letter code: ATP synthase subunit b (170 aa).

Residues 4 to 24 form a helical membrane-spanning segment; sequence ILLLGLALAPVALFASQGAVE.

The protein belongs to the ATPase B chain family. In terms of assembly, F-type ATPases have 2 components, F(1) - the catalytic core - and F(0) - the membrane proton channel. F(1) has five subunits: alpha(3), beta(3), gamma(1), delta(1), epsilon(1). F(0) has three main subunits: a(1), b(2) and c(10-14). The alpha and beta chains form an alternating ring which encloses part of the gamma chain. F(1) is attached to F(0) by a central stalk formed by the gamma and epsilon chains, while a peripheral stalk is formed by the delta and b chains.

It localises to the cell inner membrane. Functionally, f(1)F(0) ATP synthase produces ATP from ADP in the presence of a proton or sodium gradient. F-type ATPases consist of two structural domains, F(1) containing the extramembraneous catalytic core and F(0) containing the membrane proton channel, linked together by a central stalk and a peripheral stalk. During catalysis, ATP synthesis in the catalytic domain of F(1) is coupled via a rotary mechanism of the central stalk subunits to proton translocation. Its function is as follows. Component of the F(0) channel, it forms part of the peripheral stalk, linking F(1) to F(0). The chain is ATP synthase subunit b from Aliarcobacter butzleri (strain RM4018) (Arcobacter butzleri).